Here is a 3907-residue protein sequence, read N- to C-terminus: A-kinase anchor protein 9 (3907 aa).

Residues 1-14 are compositionally biased toward basic and acidic residues; that stretch reads MEDEERQKKLEAGK. Positions 1–57 are disordered; sequence MEDEERQKKLEAGKAKLAQFRQRKAQSDGQSPSKKQKKKRKTSSSKHDVSAHHDLNI. The segment covering 34–44 has biased composition (basic residues); the sequence is KKQKKKRKTSS. Basic and acidic residues predominate over residues 45–56; that stretch reads SKHDVSAHHDLN. Coiled-coil stretches lie at residues 152–902, 932–1010, 1088–1173, 1241–1268, 1324–1380, 1422–1447, and 1573–1647; these read DSPT…ELHL, EVVE…ENVQ, QPSE…QTMK, ELQD…EEYN, KLSS…ESTV, VKEE…VAKV, and SMDA…DNEN. At Ser153 the chain carries Phosphoserine. Position 1327 is a phosphoserine (Ser1327). Residues 1682-1692 show a composition bias toward low complexity; that stretch reads STQTQNGNENQ. Residues 1682 to 1713 are disordered; the sequence is STQTQNGNENQGEVEEQTFKEKELDRKPEDVP. Residues 1698–1711 are compositionally biased toward basic and acidic residues; that stretch reads QTFKEKELDRKPED. Ser1765 carries the post-translational modification Phosphoserine. Coiled-coil stretches lie at residues 1845 to 2443, 2532 to 2549, 2591 to 2764, 3061 to 3088, 3120 to 3466, and 3583 to 3685; these read NISS…VEKI, ETEM…IVEE, QLRE…SKKA, LNCL…ADRR, ELLE…NLNE, and SLTE…NDSL. The tract at residues 2542-2555 is PKA-RII subunit binding domain; the sequence is NLQKIVEEKVAAAL. The interval 3377–3405 is disordered; sequence RQQMEKDRQVHRKTLQTEQEANTEGQKKM. 4 positions are modified to phosphoserine: Ser3690, Ser3842, Ser3865, and Ser3897.

In terms of assembly, interacts with the regulatory region of protein kinase N (PKN), protein phosphatase 2A (PP2A), protein phosphatase 1 (PP1) and the immature non-phosphorylated form of PKC epsilon. Interacts with CIP4 and FNBP1. Interacts with chloride intracellular channel proteins CLIC1, CLIC4 and CLIC5. CSNK1D binding promotes its centrosomal subcellular location. Interacts with GM130/GOLGA2; leading to recruitment to the Golgi apparatus. Interacts with KCNQ1; targets protein kinase A (PKA) catalytic and regulatory subunits and protein phosphatase 1 (PP1), to the heterodimer KCNQ1-KCNE1. Interacts with PDE4DIP isoform 13/MMG8/SMYLE; this interaction stabilizes both proteins. In complex with PDE4DIP isoform 13, recruits CAMSAP2 to the Golgi apparatus. Forms a pericentrosomal complex with CDK5RAP2, EB1/MAPRE1 and PDE4DIP isoform 13; within this complex, MAPRE1 binding to CDK5RAP2 may be mediated by PDE4DIP. Interacts with MAPRE1 and MAPRE3. Interacts (via C-terminus) with CAMSAP2; this interaction is much stronger in the presence of PDE4DIP isoform 13/MMG8/SMYLE. Interacts with CAMSAP3. Interacts (via C-terminus) with the gamma-tubulin ring complex (gamma-TuRC), composed of gamma-tubulin, TUBGCP2, TUBGCP3, TUBGCP4, TUBGCP5 and TUBGCP6. As to expression, widely expressed. Isoform 4: Highly expressed in skeletal muscle and in pancreas.

The protein localises to the golgi apparatus. The protein resides in the cytoplasm. It localises to the cytoskeleton. Its subcellular location is the microtubule organizing center. It is found in the centrosome. Scaffolding protein that assembles several protein kinases and phosphatases on the centrosome and Golgi apparatus. Required to maintain the integrity of the Golgi apparatus. Required for microtubule nucleation at the cis-side of the Golgi apparatus. Required for association of the centrosomes with the poles of the bipolar mitotic spindle during metaphase. In complex with PDE4DIP isoform 13/MMG8/SMYLE, recruits CAMSAP2 to the Golgi apparatus and tethers non-centrosomal minus-end microtubules to the Golgi, an important step for polarized cell movement. In complex with PDE4DIP isoform 13/MMG8/SMYLE, EB1/MAPRE1 and CDK5RAP2, contributes to microtubules nucleation and extension also from the centrosome to the cell periphery. Functionally, associated with the N-methyl-D-aspartate receptor and is specifically found in the neuromuscular junction (NMJ) as well as in neuronal synapses, suggesting a role in the organization of postsynaptic specializations. The sequence is that of A-kinase anchor protein 9 (AKAP9) from Homo sapiens (Human).